We begin with the raw amino-acid sequence, 370 residues long: MTLPRSSRSVAVDGAQPYTITIAPGLLADGARLARHVRGRHALLLSDSQVAPHYAAGVRAALLSARPDLQIGELVIAAGEASKTLDTFGSAITALAELGATRDACVFALGGGVVGDLAGFAAACWMRGVDCVQLPTSLLAMVDSSVGGKTAVDIPQGKNLVGAFHPPRAVLADTDTLRTLPARELRAGLAEVIKYGAIRDPLFFQWLHAERHALLDSDPAALAQAIARSCEHKAEIVARDPLEKGERALLNLGHTFGHAIETEQGYGAPGNDNLNHGEAVAVGMVLAARLSATLGMSNAQDTEALRALLHDFELPTDIPPGLPPEALLARMRLDKKNIAGRLRLVLWRGIGKAEVVPDVEEAAVLKILAG.

NAD(+) is bound by residues G112 to D116, T136 to S137, K149, K158, and T176 to T179. Residues E191, H254, and H276 each contribute to the Zn(2+) site.

This sequence belongs to the sugar phosphate cyclases superfamily. Dehydroquinate synthase family. The cofactor is Co(2+). Zn(2+) serves as cofactor. It depends on NAD(+) as a cofactor.

It is found in the cytoplasm. It catalyses the reaction 7-phospho-2-dehydro-3-deoxy-D-arabino-heptonate = 3-dehydroquinate + phosphate. The protein operates within metabolic intermediate biosynthesis; chorismate biosynthesis; chorismate from D-erythrose 4-phosphate and phosphoenolpyruvate: step 2/7. Its function is as follows. Catalyzes the conversion of 3-deoxy-D-arabino-heptulosonate 7-phosphate (DAHP) to dehydroquinate (DHQ). This chain is 3-dehydroquinate synthase, found in Xanthomonas oryzae pv. oryzae (strain MAFF 311018).